Consider the following 206-residue polypeptide: Ribonuclease HII (206 aa).

An RNase H type-2 domain is found at A14 to P206. Residues D20, E21, and D117 each coordinate a divalent metal cation.

Belongs to the RNase HII family. It depends on Mn(2+) as a cofactor. Mg(2+) serves as cofactor.

The protein resides in the cytoplasm. It catalyses the reaction Endonucleolytic cleavage to 5'-phosphomonoester.. Its function is as follows. Endonuclease that specifically degrades the RNA of RNA-DNA hybrids. The protein is Ribonuclease HII of Pelodictyon phaeoclathratiforme (strain DSM 5477 / BU-1).